The following is a 313-amino-acid chain: Sideroflexin-4 (313 aa).

The next 2 membrane-spanning stretches (helical) occupy residues Ala87 to Ile107 and Thr141 to Phe161. Lys173 carries the N6-acetyllysine modification. 3 helical membrane passes run Thr175–Ala191, Ala230–Phe247, and Phe269–Ile289.

The protein belongs to the sideroflexin family. In terms of tissue distribution, largely restricted to kidney, brain and heart.

The protein localises to the mitochondrion inner membrane. In terms of biological role, mitochondrial amino-acid transporter. Does not act as a serine transporter: not able to mediate transport of serine into mitochondria. In Mus musculus (Mouse), this protein is Sideroflexin-4.